The chain runs to 735 residues: Alpha-adducin (735 aa).

At Met1 the chain carries N-acetylmethionine. Residues 1 to 11 (MNGDTRAAVVT) show a composition bias toward low complexity. A disordered region spans residues 1 to 21 (MNGDTRAAVVTSPPPTTAPHK). Ser12 is modified (phosphoserine). Ser59 bears the Phosphoserine; by PKA mark. A Phosphoserine modification is found at Ser64. At Thr331 the chain carries Phosphothreonine. Ser334, Ser353, and Ser355 each carry phosphoserine. Residue Thr358 is modified to Phosphothreonine. Residues Ser364 and Ser366 each carry the phosphoserine modification. The residue at position 408 (Ser408) is a Phosphoserine; by PKA. Disordered stretches follow at residues 418 to 486 (GHSF…SAVP) and 576 to 735 (RREV…KSDS). Ser427 is modified (phosphoserine). Phosphothreonine is present on Thr429. A Phosphoserine modification is found at Ser431. Position 436 is a phosphoserine; by PKA (Ser436). A Phosphothreonine; by ROCK2 modification is found at Thr445. A phosphoserine mark is found at Ser464 and Ser465. A Phosphothreonine; by ROCK2 modification is found at Thr480. Ser481 is modified (phosphoserine; by PKA). Over residues 576–601 (RREVERKQKGSEENLDETREQKEKSP) the composition is skewed to basic and acidic residues. Phosphoserine occurs at positions 586, 600, and 605. Residue Thr610 is modified to Phosphothreonine. Ser613 is modified (phosphoserine). At Thr614 the chain carries Phosphothreonine. Low complexity predominate over residues 678 to 712 (EPASASAPGAEEVASPATEEGSPMDPGSDGSPGKS). 3 positions are modified to phosphoserine: Ser705, Ser708, and Ser712. Residues 713-735 (PSKKKKKFRTPSFLKKSKKKSDS) show a composition bias toward basic residues. Position 714 is a phosphoserine; by PKC (Ser714). Residues 715 to 732 (KKKKKFRTPSFLKKSKKK) form an interaction with calmodulin region. Position 724 is a phosphoserine; by PKA and PKC (Ser724).

The protein belongs to the aldolase class II family. Adducin subfamily. In terms of assembly, heterodimer of an alpha and a beta subunit or an alpha and a gamma subunit.

The protein localises to the cytoplasm. It is found in the cytoskeleton. Its subcellular location is the cell membrane. Functionally, membrane-cytoskeleton-associated protein that promotes the assembly of the spectrin-actin network. Binds to calmodulin. The protein is Alpha-adducin (Add1) of Rattus norvegicus (Rat).